Here is a 128-residue protein sequence, read N- to C-terminus: Glycine cleavage system H protein (128 aa).

One can recognise a Lipoyl-binding domain in the interval 24-106; sequence VYTVGITEHA…YAEGFLFQIK (83 aa). Residue Lys-65 is modified to N6-lipoyllysine.

The protein belongs to the GcvH family. In terms of assembly, the glycine cleavage system is composed of four proteins: P, T, L and H. Requires (R)-lipoate as cofactor.

In terms of biological role, the glycine cleavage system catalyzes the degradation of glycine. The H protein shuttles the methylamine group of glycine from the P protein to the T protein. The protein is Glycine cleavage system H protein of Serratia proteamaculans (strain 568).